Reading from the N-terminus, the 148-residue chain is Large-conductance mechanosensitive channel (148 aa).

The next 2 helical transmembrane spans lie at 12–32 and 85–105; these read AFAMKGNVIDMAVGVVIGGAF and GQFLQATFDFLIIAFAIFLFI.

The protein belongs to the MscL family. As to quaternary structure, homopentamer.

The protein resides in the cell inner membrane. Its function is as follows. Channel that opens in response to stretch forces in the membrane lipid bilayer. May participate in the regulation of osmotic pressure changes within the cell. The chain is Large-conductance mechanosensitive channel from Bacteroides thetaiotaomicron (strain ATCC 29148 / DSM 2079 / JCM 5827 / CCUG 10774 / NCTC 10582 / VPI-5482 / E50).